Consider the following 601-residue polypeptide: Group B oligopeptidase PepB (601 aa).

Residue His-386 participates in Zn(2+) binding. The active site involves Glu-387. Zn(2+) contacts are provided by His-390 and His-393.

The protein belongs to the peptidase M3B family. It depends on Zn(2+) as a cofactor.

It is found in the cytoplasm. Functionally, has oligopeptidase activity and degrades a variety of small bioactive peptides, including bradykinin, neurotensin, and peptide fragments of substance P and adrenocorticotropin. Also hydrolyzes the synthetic collagen-like substrate N-(3-[2-furyl]acryloyl)-Leu-Gly-Pro-Ala (FALGPA). The polypeptide is Group B oligopeptidase PepB (pepB) (Streptococcus agalactiae serotype III (strain NEM316)).